The chain runs to 142 residues: ATP synthase epsilon chain (142 aa).

It belongs to the ATPase epsilon chain family. In terms of assembly, F-type ATPases have 2 components, CF(1) - the catalytic core - and CF(0) - the membrane proton channel. CF(1) has five subunits: alpha(3), beta(3), gamma(1), delta(1), epsilon(1). CF(0) has three main subunits: a, b and c.

Its subcellular location is the cell inner membrane. Functionally, produces ATP from ADP in the presence of a proton gradient across the membrane. This chain is ATP synthase epsilon chain, found in Shewanella halifaxensis (strain HAW-EB4).